The following is a 94-amino-acid chain: Small ubiquitin-related modifier 3 (94 aa).

Lysine 11 is covalently cross-linked (Glycyl lysine isopeptide (Lys-Gly) (interchain with G-Cter in SUMO)). One can recognise a Ubiquitin-like domain in the interval 15-92 (DHINLKVAGQ…IDVFQQQTGG (78 aa)). Residue glycine 92 forms a Glycyl lysine isopeptide (Gly-Lys) (interchain with K-? in acceptor proteins) linkage. The propeptide occupies 93–94 (LC).

Belongs to the ubiquitin family. SUMO subfamily. As to quaternary structure, interacts with SAE2 and UBE2I. Covalently attached to a number of proteins. In terms of processing, polymeric chains can be formed through Lys-11 cross-linking. Cleavage of precursor form by a sentrin-specific protease is necessary for function.

The protein resides in the cytoplasm. The protein localises to the nucleus. It localises to the PML body. Its function is as follows. Ubiquitin-like protein which can be covalently attached to target lysines either as a monomer or as a lysine-linked polymer. Does not seem to be involved in protein degradation and may function as an antagonist of ubiquitin in the degradation process. Plays a role in a number of cellular processes such as nuclear transport, DNA replication and repair, mitosis and signal transduction. Covalent attachment to its substrates requires prior activation by the E1 complex SAE1-SAE2 and linkage to the E2 enzyme UBE2I. The polypeptide is Small ubiquitin-related modifier 3 (Gallus gallus (Chicken)).